A 580-amino-acid polypeptide reads, in one-letter code: Probable inactive 1-aminocyclopropane-1-carboxylate synthase-like protein 2 (580 aa).

The segment at 1–43 is disordered; sequence MSENRNEGSSQAAKANSDTQTPSHFKVTHPRLRDQLKKKSSKK. A compositionally biased stretch (polar residues) spans 7–23; it reads EGSSQAAKANSDTQTPS. K417 carries the N6-(pyridoxal phosphate)lysine modification.

Belongs to the class-I pyridoxal-phosphate-dependent aminotransferase family.

The chain is Probable inactive 1-aminocyclopropane-1-carboxylate synthase-like protein 2 (Accsl) from Mus musculus (Mouse).